Consider the following 605-residue polypeptide: Protein cueball (605 aa).

The signal sequence occupies residues 1–31 (MAYIDQKHNTFWDDFAIALRDKIVFLNSTWG). 3 N-linked (GlcNAc...) asparagine glycosylation sites follow: N27, N64, and N85. Residues 32-486 (EIHASAHRFE…QCGPAPPVQG (455 aa)) are Extracellular-facing. LDL-receptor class B repeat units lie at residues 53-97 (EMIY…DPLN), 98-145 (RNLF…DICR), 146-190 (RQLY…DQLS), and 191-236 (DRIF…NEDA). 2 N-linked (GlcNAc...) asparagine glycosylation sites follow: N261 and N314. EGF-like domains are found at residues 322–359 (EGDR…ARCE) and 394–431 (EYHK…ERCE). 5 cysteine pairs are disulfide-bonded: C334/C347, C349/C358, C398/C408, C402/C419, and C421/C430. N-linked (GlcNAc...) asparagine glycosylation is found at N433 and N464. Residues 487–507 (PLIIVIVLGLVTTSGLVALTV) traverse the membrane as a helical segment. Residues 508 to 605 (HGVRLIYKPK…IHSMEDNLLS (98 aa)) lie on the Cytoplasmic side of the membrane.

Belongs to the cueball family.

It is found in the cell membrane. In terms of biological role, has a role in spermatogenesis and oogenesis. The chain is Protein cueball from Drosophila grimshawi (Hawaiian fruit fly).